The primary structure comprises 192 residues: Ion-translocating oxidoreductase complex subunit B (192 aa).

Residues 1–26 (MSTIWIAIAALSALALAFGLVLGYAS) are hydrophobic. A 4Fe-4S domain is found at 32 to 91 (ENDPIVEEVEAMLPQSQCGQCGYPGCRPYAEAVALNGENINKCGPGGEAMMLKLAEKLNV). Residues Cys-49, Cys-52, Cys-57, Cys-74, Cys-117, Cys-120, Cys-123, Cys-127, Cys-147, Cys-150, Cys-153, and Cys-157 each coordinate [4Fe-4S] cluster. 4Fe-4S ferredoxin-type domains are found at residues 108-137 (QVAW…GSTK) and 138-167 (AVHT…LRPI).

It belongs to the 4Fe4S bacterial-type ferredoxin family. RnfB subfamily. As to quaternary structure, the complex is composed of six subunits: RnfA, RnfB, RnfC, RnfD, RnfE and RnfG. The cofactor is [4Fe-4S] cluster.

It is found in the cell inner membrane. Functionally, part of a membrane-bound complex that couples electron transfer with translocation of ions across the membrane. In Pectobacterium carotovorum subsp. carotovorum (strain PC1), this protein is Ion-translocating oxidoreductase complex subunit B.